The chain runs to 196 residues: Sulfur-rich protein (196 aa).

3 helical membrane passes run 34–54 (VTAG…LIGW), 76–96 (ITLL…MFIF), and 105–125 (FWLI…SLCF).

The protein resides in the membrane. This chain is Sulfur-rich protein (srp), found in Chlamydia pneumoniae (Chlamydophila pneumoniae).